Consider the following 158-residue polypeptide: Cyclic pyranopterin monophosphate synthase (158 aa).

Residues 74–76 and 112–113 contribute to the substrate site; these read MCH and ME. The active site involves Asp-127.

It belongs to the MoaC family. As to quaternary structure, homohexamer; trimer of dimers.

It carries out the reaction (8S)-3',8-cyclo-7,8-dihydroguanosine 5'-triphosphate = cyclic pyranopterin phosphate + diphosphate. It functions in the pathway cofactor biosynthesis; molybdopterin biosynthesis. Catalyzes the conversion of (8S)-3',8-cyclo-7,8-dihydroguanosine 5'-triphosphate to cyclic pyranopterin monophosphate (cPMP). In Helicobacter pylori (strain G27), this protein is Cyclic pyranopterin monophosphate synthase.